Consider the following 183-residue polypeptide: Transmembrane and coiled-coil domain-containing protein 2 (183 aa).

Residues 54-74 (VQIILGISFLTLLAIGLFALW) form a helical membrane-spanning segment. A coiled-coil region spans residues 127-150 (GLQEKILKKLQMVENKVRDLEGII).

It is found in the membrane. The polypeptide is Transmembrane and coiled-coil domain-containing protein 2 (Tmco2) (Mus musculus (Mouse)).